The primary structure comprises 433 residues: Signal recognition particle 54 kDa protein (433 aa).

Residues 106 to 113 (GVEGSGKT), 186 to 190 (DTAGR), and 244 to 247 (TKMD) each bind GTP.

It belongs to the GTP-binding SRP family. SRP54 subfamily. As to quaternary structure, part of the signal recognition particle protein translocation system, which is composed of SRP and FtsY. Archaeal SRP consists of a 7S RNA molecule of 300 nucleotides and two protein subunits: SRP54 and SRP19.

The protein resides in the cytoplasm. The catalysed reaction is GTP + H2O = GDP + phosphate + H(+). Functionally, involved in targeting and insertion of nascent membrane proteins into the cytoplasmic membrane. Binds to the hydrophobic signal sequence of the ribosome-nascent chain (RNC) as it emerges from the ribosomes. The SRP-RNC complex is then targeted to the cytoplasmic membrane where it interacts with the SRP receptor FtsY. This chain is Signal recognition particle 54 kDa protein, found in Pyrobaculum neutrophilum (strain DSM 2338 / JCM 9278 / NBRC 100436 / V24Sta) (Thermoproteus neutrophilus).